We begin with the raw amino-acid sequence, 127 residues long: SH2 domain-containing protein 1A (127 aa).

In terms of domain architecture, SH2 spans 6-102 (VYHGKISRET…GIVIPLQYPV (97 aa)). The interaction with FYN SH3 domain stretch occupies residues 67–92 (ETAPGVHKRYFRKIKNLISAFQKPDQ). Lys89 carries the post-translational modification N6-acetyllysine. Residues 104–127 (KSSPRSTQGTTGIREDPDVCLKAP) are disordered. Positions 116-127 (IREDPDVCLKAP) are enriched in basic and acidic residues.

As to quaternary structure, interacts with CD84, CD244, LY9, SLAMF1 and FYN. Interacts with NTRK1, NTRK2 and NTRK3.

It is found in the cytoplasm. Cytoplasmic adapter regulating receptors of the signaling lymphocytic activation molecule (SLAM) family such as SLAMF1, CD244, LY9, CD84, SLAMF6 and SLAMF7. In SLAM signaling seems to cooperate with SH2D1B/EAT-2. Initially it has been proposed that association with SLAMF1 prevents SLAMF1 binding to inhibitory effectors including INPP5D/SHIP1 and PTPN11/SHP-2. However, by simultaneous interactions, recruits FYN which subsequently phosphorylates and activates SLAMF1. Positively regulates CD244/2B4- and CD84-mediated natural killer (NK) cell functions. Can also promote CD48-, SLAMF6 -, LY9-, and SLAMF7-mediated NK cell activation. In the context of NK cell-mediated cytotoxicity enhances conjugate formation with target cells. May also regulate the activity of the neurotrophin receptors NTRK1, NTRK2 and NTRK3. The polypeptide is SH2 domain-containing protein 1A (SH2D1A) (Saguinus oedipus (Cotton-top tamarin)).